Consider the following 206-residue polypeptide: Phosphoribosylglycinamide formyltransferase (206 aa).

N(1)-(5-phospho-beta-D-ribosyl)glycinamide is bound at residue 13–15 (GTN). (6R)-10-formyltetrahydrofolate is bound by residues 99 to 102 (MIIL) and Asn-121. His-123 (proton donor) is an active-site residue. Residue Asp-163 participates in (6R)-10-formyltetrahydrofolate binding. Glu-192 contributes to the N(1)-(5-phospho-beta-D-ribosyl)glycinamide binding site.

This sequence belongs to the GART family.

It carries out the reaction N(1)-(5-phospho-beta-D-ribosyl)glycinamide + (6R)-10-formyltetrahydrofolate = N(2)-formyl-N(1)-(5-phospho-beta-D-ribosyl)glycinamide + (6S)-5,6,7,8-tetrahydrofolate + H(+). Its pathway is purine metabolism; IMP biosynthesis via de novo pathway; N(2)-formyl-N(1)-(5-phospho-D-ribosyl)glycinamide from N(1)-(5-phospho-D-ribosyl)glycinamide (10-formyl THF route): step 1/1. In Dictyostelium discoideum (Social amoeba), this protein is Phosphoribosylglycinamide formyltransferase (purN).